A 199-amino-acid chain; its full sequence is Pyridoxal 5'-phosphate synthase subunit PdxT (199 aa).

47-49 (GES) serves as a coordination point for L-glutamine. The active-site Nucleophile is Cys-79. Residues Arg-106 and 133 to 134 (IR) each bind L-glutamine. Residues His-169 and Glu-171 each act as charge relay system in the active site.

The protein belongs to the glutaminase PdxT/SNO family. In terms of assembly, in the presence of PdxS, forms a dodecamer of heterodimers. Only shows activity in the heterodimer.

The catalysed reaction is aldehydo-D-ribose 5-phosphate + D-glyceraldehyde 3-phosphate + L-glutamine = pyridoxal 5'-phosphate + L-glutamate + phosphate + 3 H2O + H(+). It catalyses the reaction L-glutamine + H2O = L-glutamate + NH4(+). It functions in the pathway cofactor biosynthesis; pyridoxal 5'-phosphate biosynthesis. Functionally, catalyzes the hydrolysis of glutamine to glutamate and ammonia as part of the biosynthesis of pyridoxal 5'-phosphate. The resulting ammonia molecule is channeled to the active site of PdxS. The chain is Pyridoxal 5'-phosphate synthase subunit PdxT from Desulfitobacterium hafniense (strain DSM 10664 / DCB-2).